We begin with the raw amino-acid sequence, 124 residues long: Putative outer membrane protein CT_569 (124 aa).

A signal peptide spans 1-31; the sequence is MKKTKKRKQSITLVEMMVVITLIGIIGGALA.

It localises to the cell outer membrane. In Chlamydia trachomatis serovar D (strain ATCC VR-885 / DSM 19411 / UW-3/Cx), this protein is Putative outer membrane protein CT_569.